Reading from the N-terminus, the 551-residue chain is Hydroxymethylpyrimidine/phosphomethylpyrimidine kinase THI20 (551 aa).

Gln-64 provides a ligand contact to 4-amino-5-hydroxymethyl-2-methylpyrimidine. Cys-468 serves as the catalytic Nucleophile. The active-site Proton donor is the Glu-540.

It in the N-terminal section; belongs to the ThiD family. The protein in the C-terminal section; belongs to the thiaminase-2 family.

The catalysed reaction is 4-amino-5-hydroxymethyl-2-methylpyrimidine + ATP = 4-amino-2-methyl-5-(phosphooxymethyl)pyrimidine + ADP + H(+). It carries out the reaction 4-amino-2-methyl-5-(phosphooxymethyl)pyrimidine + ATP = 4-amino-2-methyl-5-(diphosphooxymethyl)pyrimidine + ADP. It catalyses the reaction thiamine + H2O = 5-(2-hydroxyethyl)-4-methylthiazole + 4-amino-5-hydroxymethyl-2-methylpyrimidine + H(+). The protein operates within cofactor biosynthesis; thiamine diphosphate biosynthesis; 4-amino-2-methyl-5-diphosphomethylpyrimidine from 5-amino-1-(5-phospho-D-ribosyl)imidazole: step 2/3. It participates in cofactor biosynthesis; thiamine diphosphate biosynthesis; 4-amino-2-methyl-5-diphosphomethylpyrimidine from 5-amino-1-(5-phospho-D-ribosyl)imidazole: step 3/3. In terms of biological role, trifunctional protein with both thiamine biosynthetic and degradative activity. Within the thiamine biosynthesis pathway, catalyzes the phosphorylation of hydroxymethylpyrimidine (HMP) to hydroxymethylpyrimidine phosphate (HMP-P), as well as of HMP-P to HMP-PP. Also has thiaminase II activity and degrades thiamine using water as the nucleophile, resulting only in the formation of HMP (4-amino-2-methyl-5-hydroxymethylpyrimidine) and Thz (4-methyl-5-thiazole ethanol). This is Hydroxymethylpyrimidine/phosphomethylpyrimidine kinase THI20 from Saccharomyces cerevisiae (strain ATCC 204508 / S288c) (Baker's yeast).